Consider the following 913-residue polypeptide: Protein translocase subunit SecA (913 aa).

ATP-binding positions include Q87, 105-109 (GEGKT), and D512. The Zn(2+) site is built by C897, C899, C908, and H909.

It belongs to the SecA family. In terms of assembly, monomer and homodimer. Part of the essential Sec protein translocation apparatus which comprises SecA, SecYEG and auxiliary proteins SecDF-YajC and YidC. The cofactor is Zn(2+).

It localises to the cell inner membrane. It is found in the cytoplasm. The enzyme catalyses ATP + H2O + cellular proteinSide 1 = ADP + phosphate + cellular proteinSide 2.. Functionally, part of the Sec protein translocase complex. Interacts with the SecYEG preprotein conducting channel. Has a central role in coupling the hydrolysis of ATP to the transfer of proteins into and across the cell membrane, serving both as a receptor for the preprotein-SecB complex and as an ATP-driven molecular motor driving the stepwise translocation of polypeptide chains across the membrane. The chain is Protein translocase subunit SecA from Pseudomonas syringae pv. syringae (strain B728a).